Here is a 624-residue protein sequence, read N- to C-terminus: Chaperone protein DnaK (624 aa).

The residue at position 174 (Thr174) is a Phosphothreonine; by autocatalysis. 2 disordered regions span residues 544–563 (KKAQ…DDLS) and 576–624 (NAQK…DDKK). The segment covering 581–600 (QQAQGGPASGAATDAGAAQG) has biased composition (low complexity). Basic and acidic residues predominate over residues 601 to 624 (SDDKKSDDDTINGDYKDVSDDDKK).

The protein belongs to the heat shock protein 70 family.

Functionally, acts as a chaperone. This is Chaperone protein DnaK from Lacticaseibacillus casei (strain BL23) (Lactobacillus casei).